The primary structure comprises 581 residues: Proline--tRNA ligase (581 aa).

The protein belongs to the class-II aminoacyl-tRNA synthetase family. ProS type 1 subfamily. Homodimer.

The protein resides in the cytoplasm. It carries out the reaction tRNA(Pro) + L-proline + ATP = L-prolyl-tRNA(Pro) + AMP + diphosphate. Its function is as follows. Catalyzes the attachment of proline to tRNA(Pro) in a two-step reaction: proline is first activated by ATP to form Pro-AMP and then transferred to the acceptor end of tRNA(Pro). As ProRS can inadvertently accommodate and process non-cognate amino acids such as alanine and cysteine, to avoid such errors it has two additional distinct editing activities against alanine. One activity is designated as 'pretransfer' editing and involves the tRNA(Pro)-independent hydrolysis of activated Ala-AMP. The other activity is designated 'posttransfer' editing and involves deacylation of mischarged Ala-tRNA(Pro). The misacylated Cys-tRNA(Pro) is not edited by ProRS. The chain is Proline--tRNA ligase from Methylibium petroleiphilum (strain ATCC BAA-1232 / LMG 22953 / PM1).